The primary structure comprises 681 residues: Spermatogenesis-associated protein 21 (681 aa).

Positions 1 to 14 (MENRNTHTHPESKA) are enriched in basic and acidic residues. Disordered stretches follow at residues 1 to 284 (MENR…ANSR) and 298 to 336 (EEAT…VPTL). Polar residues-rich tracts occupy residues 83-94 (QEPSARPRTTQD) and 159-173 (PSNS…NSPS). Residues 251–261 (PEERDTEKKEL) are compositionally biased toward basic and acidic residues. Residues 264–281 (GQKQRQQALSAAGTQGPA) show a composition bias toward polar residues. A compositionally biased stretch (low complexity) spans 319-335 (TVTSVSTSGPISSSVPT). An EF-hand domain is found at 464–499 (FTPAQVEEALMSADVNGDGHVDFKDFLAVMTDTKRF). Ca(2+) contacts are provided by aspartate 477, asparagine 479, aspartate 481, histidine 483, and aspartate 488. A disordered region spans residues 653–681 (LFFQPGQQGSREHSSDSRKWLSSMPARTH). The segment covering 662-671 (SREHSSDSRK) has biased composition (basic and acidic residues).

In terms of biological role, involved in the differentiation of haploid spermatids. This chain is Spermatogenesis-associated protein 21 (Spata21), found in Mus musculus (Mouse).